We begin with the raw amino-acid sequence, 341 residues long: Geranylgeranyl transferase type-2 subunit beta (341 aa).

6 PFTB repeats span residues 15–55 (KSKH…ITMN), 62–104 (QQDV…KIYD), 122–163 (RERL…SLLN), 170–211 (ADTA…AIMN), 223–264 (VKLI…SILK), and 271–313 (LKIL…SLID). Geranylgeranyl diphosphate-binding positions include 196-198 (HAA) and 243-255 (RPEK…YSWW). Zn(2+)-binding residues include Asp249, Cys251, and His301.

Belongs to the protein prenyltransferase subunit beta family. As to quaternary structure, heterodimer of an alpha and a beta subunit. Requires Zn(2+) as cofactor.

It carries out the reaction geranylgeranyl diphosphate + L-cysteinyl-[protein] = S-geranylgeranyl-L-cysteinyl-[protein] + diphosphate. Functionally, catalyzes the transfer of a geranyl-geranyl moiety from geranyl-geranyl pyrophosphate to proteins having the C-terminal -XCC or -XCXC, where both cysteines may become modified. Acts on YPT1 and SEC4. The polypeptide is Geranylgeranyl transferase type-2 subunit beta (BET2) (Candida albicans (Yeast)).